The following is a 160-amino-acid chain: Photosystem I reaction center subunit XI (160 aa).

The next 2 helical transmembrane spans lie at Leu-84 to Val-104 and Phe-125 to Glu-145.

The protein belongs to the PsaL family.

The protein resides in the cellular thylakoid membrane. The protein is Photosystem I reaction center subunit XI of Microcystis aeruginosa (strain NIES-843 / IAM M-2473).